A 448-amino-acid polypeptide reads, in one-letter code: Exodeoxyribonuclease 7 large subunit (448 aa).

The protein belongs to the XseA family. Heterooligomer composed of large and small subunits.

The protein localises to the cytoplasm. The protein resides in the nucleoid. The catalysed reaction is Exonucleolytic cleavage in either 5'- to 3'- or 3'- to 5'-direction to yield nucleoside 5'-phosphates.. In terms of biological role, bidirectionally degrades single-stranded DNA into large acid-insoluble oligonucleotides, which are then degraded further into small acid-soluble oligonucleotides. The sequence is that of Exodeoxyribonuclease 7 large subunit from Bacillus subtilis (strain 168).